The following is a 377-amino-acid chain: Succinyl-diaminopimelate desuccinylase (377 aa).

Histidine 68 lines the Zn(2+) pocket. Aspartate 70 is a catalytic residue. Aspartate 101 serves as a coordination point for Zn(2+). The Proton acceptor role is filled by glutamate 135. Zn(2+) contacts are provided by glutamate 136, glutamate 164, and histidine 350.

The protein belongs to the peptidase M20A family. DapE subfamily. In terms of assembly, homodimer. Zn(2+) serves as cofactor. The cofactor is Co(2+).

The catalysed reaction is N-succinyl-(2S,6S)-2,6-diaminopimelate + H2O = (2S,6S)-2,6-diaminopimelate + succinate. It functions in the pathway amino-acid biosynthesis; L-lysine biosynthesis via DAP pathway; LL-2,6-diaminopimelate from (S)-tetrahydrodipicolinate (succinylase route): step 3/3. Its function is as follows. Catalyzes the hydrolysis of N-succinyl-L,L-diaminopimelic acid (SDAP), forming succinate and LL-2,6-diaminopimelate (DAP), an intermediate involved in the bacterial biosynthesis of lysine and meso-diaminopimelic acid, an essential component of bacterial cell walls. This is Succinyl-diaminopimelate desuccinylase from Acinetobacter baylyi (strain ATCC 33305 / BD413 / ADP1).